Reading from the N-terminus, the 319-residue chain is 4-hydroxy-3-methylbut-2-enyl diphosphate reductase (319 aa).

Residue Cys12 participates in [4Fe-4S] cluster binding. Residues His41 and His74 each contribute to the (2E)-4-hydroxy-3-methylbut-2-enyl diphosphate site. Dimethylallyl diphosphate is bound by residues His41 and His74. 2 residues coordinate isopentenyl diphosphate: His41 and His74. [4Fe-4S] cluster is bound at residue Cys96. Residue His124 participates in (2E)-4-hydroxy-3-methylbut-2-enyl diphosphate binding. Residue His124 participates in dimethylallyl diphosphate binding. His124 provides a ligand contact to isopentenyl diphosphate. The active-site Proton donor is Glu126. Thr167 provides a ligand contact to (2E)-4-hydroxy-3-methylbut-2-enyl diphosphate. A [4Fe-4S] cluster-binding site is contributed by Cys197. Residues Ser225, Ser226, Asn227, and Ser269 each contribute to the (2E)-4-hydroxy-3-methylbut-2-enyl diphosphate site. Positions 225, 226, 227, and 269 each coordinate dimethylallyl diphosphate. Residues Ser225, Ser226, Asn227, and Ser269 each contribute to the isopentenyl diphosphate site.

The protein belongs to the IspH family. Homodimer. The cofactor is [4Fe-4S] cluster.

It carries out the reaction isopentenyl diphosphate + 2 oxidized [2Fe-2S]-[ferredoxin] + H2O = (2E)-4-hydroxy-3-methylbut-2-enyl diphosphate + 2 reduced [2Fe-2S]-[ferredoxin] + 2 H(+). The catalysed reaction is dimethylallyl diphosphate + 2 oxidized [2Fe-2S]-[ferredoxin] + H2O = (2E)-4-hydroxy-3-methylbut-2-enyl diphosphate + 2 reduced [2Fe-2S]-[ferredoxin] + 2 H(+). It functions in the pathway isoprenoid biosynthesis; dimethylallyl diphosphate biosynthesis; dimethylallyl diphosphate from (2E)-4-hydroxy-3-methylbutenyl diphosphate: step 1/1. The protein operates within isoprenoid biosynthesis; isopentenyl diphosphate biosynthesis via DXP pathway; isopentenyl diphosphate from 1-deoxy-D-xylulose 5-phosphate: step 6/6. Catalyzes the conversion of 1-hydroxy-2-methyl-2-(E)-butenyl 4-diphosphate (HMBPP) into a mixture of isopentenyl diphosphate (IPP) and dimethylallyl diphosphate (DMAPP). Acts in the terminal step of the DOXP/MEP pathway for isoprenoid precursor biosynthesis. The polypeptide is 4-hydroxy-3-methylbut-2-enyl diphosphate reductase (Buchnera aphidicola subsp. Acyrthosiphon pisum (strain Tuc7)).